A 444-amino-acid polypeptide reads, in one-letter code: L-cysteine:1D-myo-inositol 2-amino-2-deoxy-alpha-D-glucopyranoside ligase (444 aa).

Cysteine 66 lines the Zn(2+) pocket. Residues 66-69, threonine 81, and 104-106 each bind L-cysteinyl-5'-AMP; these read CGIT and NVT. The 'HIGH' region signature appears at 68–78; it reads ITPYDATHLGH. Residues 206–211 carry the 'ERGGDP' region motif; it reads EHGGDP. Tryptophan 246 is an L-cysteinyl-5'-AMP binding site. A Zn(2+)-binding site is contributed by cysteine 250. 268-270 lines the L-cysteinyl-5'-AMP pocket; it reads GSD. Histidine 275 is a Zn(2+) binding site. An L-cysteinyl-5'-AMP-binding site is contributed by valine 302. A 'KMSKS' region motif is present at residues 308–312; sequence KMSKS.

Belongs to the class-I aminoacyl-tRNA synthetase family. MshC subfamily. In terms of assembly, monomer. Requires Zn(2+) as cofactor.

The enzyme catalyses 1D-myo-inositol 2-amino-2-deoxy-alpha-D-glucopyranoside + L-cysteine + ATP = 1D-myo-inositol 2-(L-cysteinylamino)-2-deoxy-alpha-D-glucopyranoside + AMP + diphosphate + H(+). Catalyzes the ATP-dependent condensation of GlcN-Ins and L-cysteine to form L-Cys-GlcN-Ins. The protein is L-cysteine:1D-myo-inositol 2-amino-2-deoxy-alpha-D-glucopyranoside ligase of Parafrankia sp. (strain EAN1pec).